Consider the following 320-residue polypeptide: AA9 family lytic polysaccharide monooxygenase-like protein CEL1 (320 aa).

Positions 1–29 (MRLPSRQQVLKMLATFSLALGLFAAKVQA) are cleaved as a signal peptide. 2 cysteine pairs are disulfide-bonded: Cys78–Cys199 and Cys121–Cys126. His109 lines the Cu(2+) pocket. Asn163 is a glycosylation site (N-linked (GlcNAc...) asparagine). O2 contacts are provided by His189 and Gln194. Residue Tyr196 participates in Cu(2+) binding. The interval 255 to 284 (GSGGNGGSPTTTPHTTTPITTSPPPTSTPG) is disordered. Low complexity predominate over residues 262–274 (SPTTTPHTTTPIT). Residues 284–320 (GTIPQYGQCGGIGWTGGTGCVAPYQCKVINDYYSQCL) form the CBM1 domain.

It belongs to the polysaccharide monooxygenase AA9 family. Requires Cu(2+) as cofactor.

The protein resides in the secreted. The catalysed reaction is [(1-&gt;4)-beta-D-glucosyl]n+m + reduced acceptor + O2 = 4-dehydro-beta-D-glucosyl-[(1-&gt;4)-beta-D-glucosyl]n-1 + [(1-&gt;4)-beta-D-glucosyl]m + acceptor + H2O.. Its function is as follows. Lytic polysaccharide monooxygenase (LPMO)-like protein that binds strongly to cellulose. Seems not to acts as an endoglucanase, a ceUobiohydrolase able to hydrolyze fluorogenic cellobiosides, a /3-glucosidase, a xylanase, nor a cellobiose:quinone oxidoreductase. This is AA9 family lytic polysaccharide monooxygenase-like protein CEL1 from Agaricus bisporus (White button mushroom).